The following is a 684-amino-acid chain: DNA-directed RNA polymerase subunit beta' (684 aa).

Residues Cys69, Cys71, Cys87, and Cys90 each contribute to the Zn(2+) site. Positions 489, 491, and 493 each coordinate Mg(2+).

This sequence belongs to the RNA polymerase beta' chain family. RpoC1 subfamily. In terms of assembly, in plastids the minimal PEP RNA polymerase catalytic core is composed of four subunits: alpha, beta, beta', and beta''. When a (nuclear-encoded) sigma factor is associated with the core the holoenzyme is formed, which can initiate transcription. Requires Mg(2+) as cofactor. It depends on Zn(2+) as a cofactor.

The protein localises to the plastid. It localises to the chloroplast. It carries out the reaction RNA(n) + a ribonucleoside 5'-triphosphate = RNA(n+1) + diphosphate. In terms of biological role, DNA-dependent RNA polymerase catalyzes the transcription of DNA into RNA using the four ribonucleoside triphosphates as substrates. The protein is DNA-directed RNA polymerase subunit beta' of Morus indica (Mulberry).